Here is a 230-residue protein sequence, read N- to C-terminus: Large ribosomal subunit protein uL1 (230 aa).

Belongs to the universal ribosomal protein uL1 family. In terms of assembly, part of the 50S ribosomal subunit.

Binds directly to 23S rRNA. The L1 stalk is quite mobile in the ribosome, and is involved in E site tRNA release. In terms of biological role, protein L1 is also a translational repressor protein, it controls the translation of the L11 operon by binding to its mRNA. The sequence is that of Large ribosomal subunit protein uL1 from Ruminiclostridium cellulolyticum (strain ATCC 35319 / DSM 5812 / JCM 6584 / H10) (Clostridium cellulolyticum).